The chain runs to 131 residues: Profilin-10 (131 aa).

Cys13 and Cys115 are oxidised to a cystine. An Involved in PIP2 interaction motif is present at residues 81–97 (AVIRGKKGAGGITIKKT). Thr111 is subject to Phosphothreonine.

Belongs to the profilin family. In terms of assembly, occurs in many kinds of cells as a complex with monomeric actin in a 1:1 ratio. In terms of processing, phosphorylated by MAP kinases.

The protein localises to the cytoplasm. It localises to the cytoskeleton. Its function is as follows. Binds to actin and affects the structure of the cytoskeleton. At high concentrations, profilin prevents the polymerization of actin, whereas it enhances it at low concentrations. The polypeptide is Profilin-10 (Phleum pratense (Common timothy)).